The sequence spans 245 residues: tRNA (guanine-N(7)-)-methyltransferase (245 aa).

Positions 71, 96, 123, and 146 each coordinate S-adenosyl-L-methionine. Asp-146 is an active-site residue. Position 150 (Lys-150) interacts with substrate. Residues 152–157 (KHNKRR) form an interaction with RNA region. Substrate-binding positions include Asp-182 and 224 to 227 (TKFE).

It belongs to the class I-like SAM-binding methyltransferase superfamily. TrmB family.

The catalysed reaction is guanosine(46) in tRNA + S-adenosyl-L-methionine = N(7)-methylguanosine(46) in tRNA + S-adenosyl-L-homocysteine. It functions in the pathway tRNA modification; N(7)-methylguanine-tRNA biosynthesis. In terms of biological role, catalyzes the formation of N(7)-methylguanine at position 46 (m7G46) in tRNA. This is tRNA (guanine-N(7)-)-methyltransferase from Albidiferax ferrireducens (strain ATCC BAA-621 / DSM 15236 / T118) (Rhodoferax ferrireducens).